We begin with the raw amino-acid sequence, 518 residues long: E3 ubiquitin-protein ligase TRIM39 (518 aa).

An RING-type zinc finger spans residues 29 to 70 (CSVCLEYLKEPVIIECGHNFCKACITRWWEDLERDFPCPVCR). The B box-type zinc finger occupies 102–143 (RDESLCPQHHEALSLFCYEDQEAVCLICAISHTHRAHTVVPL). Zn(2+)-binding residues include Cys-107, His-110, Cys-129, and His-135. The stretch at 181–250 (ELKRLVESRR…AHLAAEVEGK (70 aa)) forms a coiled coil. Interaction with CDKN1A regions lie at residues 268-337 (KNIP…QLIA) and 389-518 (TSGR…TDWE). Residues 319 to 514 (SNFPRQYFAL…NAAPLTIRPP (196 aa)) enclose the B30.2/SPRY domain.

This sequence belongs to the TRIM/RBCC family. Isoform 1 interacts with MOAP1. Isoform 1 and isoform 2 interact with CDKN1A. Isoform 2 interacts (via domain B box-type) with CACTIN. Post-translationally, autoubiquitinated. Ubiquitous; highly expressed in brain, heart, kidney, liver, skeletal muscle, spleen and testis.

The protein resides in the cytoplasm. Its subcellular location is the cytosol. The protein localises to the mitochondrion. It is found in the nucleus. It carries out the reaction S-ubiquitinyl-[E2 ubiquitin-conjugating enzyme]-L-cysteine + [acceptor protein]-L-lysine = [E2 ubiquitin-conjugating enzyme]-L-cysteine + N(6)-ubiquitinyl-[acceptor protein]-L-lysine.. It participates in protein modification; protein ubiquitination. E3 ubiquitin-protein ligase. May facilitate apoptosis by inhibiting APC/C-Cdh1-mediated poly-ubiquitination and subsequent proteasome-mediated degradation of the pro-apoptotic protein MOAP1. Regulates the G1/S transition of the cell cycle and DNA damage-induced G2 arrest by stabilizing CDKN1A/p21. Positively regulates CDKN1A/p21 stability by competing with DTL for CDKN1A/p21 binding, therefore disrupting DCX(DTL) E3 ubiquitin ligase complex-mediated CDKN1A/p21 ubiquitination and degradation. Functionally, regulates the G1/S transition of the cell cycle and DNA damage-induced G2 arrest by stabilizing CDKN1A/p21. Positively regulates CDKN1A/p21 stability by competing with DTL for CDKN1A/p21 binding, therefore disrupting DCX(DTL) E3 ubiquitin ligase complex-mediated CDKN1A/p21 ubiquitination and degradation. Negatively regulates the canonical NF-kappa-B signaling pathway via stabilization of CACTIN in an ubiquitination-independent manner. This chain is E3 ubiquitin-protein ligase TRIM39 (TRIM39), found in Homo sapiens (Human).